The sequence spans 122 residues: MIQKETNLVVADNSGAKKVRCIHVFGGTGRRYASLGDQVIVSVKAAVPGGVVKKKEVCKAVVVRCAKELRRKDGSYIRFDENAVVLLNAQGEPRGTRIFGPVARELRDRKYMKIVSLAPEVL.

This sequence belongs to the universal ribosomal protein uL14 family. As to quaternary structure, part of the 50S ribosomal subunit. Forms a cluster with proteins L3 and L19. In the 70S ribosome, L14 and L19 interact and together make contacts with the 16S rRNA in bridges B5 and B8.

In terms of biological role, binds to 23S rRNA. Forms part of two intersubunit bridges in the 70S ribosome. This Chlorobium phaeovibrioides (strain DSM 265 / 1930) (Prosthecochloris vibrioformis (strain DSM 265)) protein is Large ribosomal subunit protein uL14.